We begin with the raw amino-acid sequence, 427 residues long: Lactadherin (427 aa).

The signal sequence occupies residues 1 to 18; it reads MPCPRLLAALFCSSGLFA. 2 EGF-like domains span residues 20 to 59 and 62 to 106; these read SGDFCDSSLCLHGGTCLLNEDRTPPFYCLCPEGFTGLLCN and EHGP…IHCE. 3 disulfide bridges follow: Cys-24–Cys-35, Cys-29–Cys-47, and Cys-49–Cys-58. Residue Ser-27 is glycosylated (O-linked (Fuc...) serine; in PAS-6). The O-linked (Fuc...) threonine; in PAS-7 glycan is linked to Thr-34. A glycan (N-linked (GlcNAc...) (hybrid) asparagine; in PAS-6 and PAS-7) is linked at Asn-59. Intrachain disulfides connect Cys-66–Cys-77, Cys-71–Cys-94, Cys-96–Cys-105, Cys-109–Cys-265, Cys-252–Cys-256, and Cys-270–Cys-427. A Cell attachment site motif is present at residues 85–87; that stretch reads RGD. F5/8 type C domains lie at 109–265 and 270–427; these read CTSP…LLGC and CTEP…LLGC. N-linked (GlcNAc...) (high mannose) asparagine; in PAS-6 glycosylation is present at Asn-227.

In terms of processing, the two O-linked glycans consist of Gal, GlcNAc and Fuc, with probably Fuc as reducing terminal sugar. As to expression, milk and spermatozoan. Also present in epididymis, kidney, heart, lymphatic gland and spleen but not esophagus, small intestine, muscle and liver.

Its subcellular location is the membrane. The protein resides in the secreted. The protein localises to the cytoplasmic vesicle. It is found in the secretory vesicle. It localises to the acrosome membrane. In terms of biological role, contributes to phagocytic removal of apoptotic cells in many tissues. Plays an important role in the maintenance of intestinal epithelial homeostasis and the promotion of mucosal healing. Promotes VEGF-dependent neovascularization. Specific ligand for the alpha-v/beta-3 and alpha-v/beta-5 receptors. Also binds to phosphatidylserine-enriched cell surfaces in a receptor-independent manner. Zona pellucida-binding protein which may play a role in gamete interaction. In Bos taurus (Bovine), this protein is Lactadherin (MFGE8).